Reading from the N-terminus, the 527-residue chain is Amine oxidase [flavin-containing] A (527 aa).

At Met1 the chain carries N-acetylmethionine. The Cytoplasmic segment spans residues 1–497 (MERQEKANNA…RTFWERNLPS (497 aa)). Ser383 bears the Phosphoserine mark. Cys406 carries the post-translational modification S-8alpha-FAD cysteine. Residues 498–518 (VTGLLKIIGFSTSVTALWLAV) form a helical; Anchor for type IV membrane protein membrane-spanning segment. Residues 519 to 527 (YKFRLLTRS) lie on the Mitochondrial intermembrane side of the membrane. The interaction with membrane phospholipid headgroups stretch occupies residues 520 to 522 (KFR).

This sequence belongs to the flavin monoamine oxidase family. Monomer, homo- or heterodimer (containing two subunits of similar size). Each subunit contains a covalently bound flavin. Enzymatically active as monomer. It depends on FAD as a cofactor.

The protein resides in the mitochondrion outer membrane. It catalyses the reaction a secondary aliphatic amine + O2 + H2O = a primary amine + an aldehyde + H2O2. It carries out the reaction a primary methyl amine + O2 + H2O = an aldehyde + H2O2 + NH4(+). The catalysed reaction is (R)-adrenaline + O2 + H2O = (R)-3,4-dihydroxymandelaldehyde + methylamine + H2O2. The enzyme catalyses dopamine + O2 + H2O = 3,4-dihydroxyphenylacetaldehyde + H2O2 + NH4(+). It catalyses the reaction tyramine + O2 + H2O = (4-hydroxyphenyl)acetaldehyde + H2O2 + NH4(+). It carries out the reaction (R)-noradrenaline + O2 + H2O = (R)-3,4-dihydroxymandelaldehyde + H2O2 + NH4(+). The catalysed reaction is serotonin + O2 + H2O = (5-hydroxyindol-3-yl)acetaldehyde + H2O2 + NH4(+). The enzyme catalyses kynuramine + O2 + H2O = 3-(2-aminophenyl)-3-oxopropanal + H2O2 + NH4(+). It catalyses the reaction tryptamine + O2 + H2O = indole-3-acetaldehyde + H2O2 + NH4(+). It carries out the reaction 2-phenylethylamine + O2 + H2O = 2-phenylacetaldehyde + H2O2 + NH4(+). Functionally, catalyzes the oxidative deamination of primary and some secondary amine such as neurotransmitters, with concomitant reduction of oxygen to hydrogen peroxide and has important functions in the metabolism of neuroactive and vasoactive amines in the central nervous system and peripheral tissues. Preferentially oxidizes serotonin. Also catalyzes the oxidative deamination of kynuramine to 3-(2-aminophenyl)-3-oxopropanal that can spontaneously condense to 4-hydroxyquinoline. The protein is Amine oxidase [flavin-containing] A of Sus scrofa (Pig).